Consider the following 363-residue polypeptide: NAD(P)H-quinone oxidoreductase subunit 1, chloroplastic (363 aa).

6 consecutive transmembrane segments (helical) span residues 28–48 (WVLVPILTTVLGITIGVLVIV), 98–118 (FSIGPSIAVISILLSYSVIPF), 127–147 (LPIGVFLWIAISSVAPIGLLM), 248–268 (YSGIKFGLFYVASYLNLLVSS), 300–320 (VFGMTISIFITLAKTYLFLFI), and 343–363 (FLLPISLGNLLLTTSFQLFSL).

Belongs to the complex I subunit 1 family. NDH is composed of at least 16 different subunits, 5 of which are encoded in the nucleus.

The protein localises to the plastid. The protein resides in the chloroplast thylakoid membrane. The enzyme catalyses a plastoquinone + NADH + (n+1) H(+)(in) = a plastoquinol + NAD(+) + n H(+)(out). It carries out the reaction a plastoquinone + NADPH + (n+1) H(+)(in) = a plastoquinol + NADP(+) + n H(+)(out). NDH shuttles electrons from NAD(P)H:plastoquinone, via FMN and iron-sulfur (Fe-S) centers, to quinones in the photosynthetic chain and possibly in a chloroplast respiratory chain. The immediate electron acceptor for the enzyme in this species is believed to be plastoquinone. Couples the redox reaction to proton translocation, and thus conserves the redox energy in a proton gradient. The polypeptide is NAD(P)H-quinone oxidoreductase subunit 1, chloroplastic (Cucumis sativus (Cucumber)).